The sequence spans 48 residues: Sperm protamine R3 isoform 1 (48 aa).

Positions 1-29 (ARRRHSMKKKRKSVRRRKTRKNQRKRKNS) are enriched in basic residues. The tract at residues 1–48 (ARRRHSMKKKRKSVRRRKTRKNQRKRKNSLGRSFKQHGFLKQPPRFRP) is disordered.

As to expression, testis.

The protein localises to the nucleus. The protein resides in the chromosome. In terms of biological role, protamines substitute for histones in the chromatin of sperm during the haploid phase of spermatogenesis. They compact sperm DNA into a highly condensed, stable and inactive complex. The polypeptide is Sperm protamine R3 isoform 1 (Hydrolagus colliei (Spotted ratfish)).